Consider the following 227-residue polypeptide: Small heat shock protein hspG3 (227 aa).

The sHSP domain maps to asparagine 31–asparagine 227. The segment at glutamine 119 to threonine 164 is disordered.

Belongs to the small heat shock protein (HSP20) family.

The chain is Small heat shock protein hspG3 (hspG3) from Dictyostelium discoideum (Social amoeba).